The sequence spans 549 residues: Thermosome subunit alpha (549 aa).

The segment at 529-549 (EGRQGAECPPNGCMGGMDMRM) is disordered.

Belongs to the TCP-1 chaperonin family. As to quaternary structure, forms a Heterooligomeric complex of two stacked eight-membered rings.

Its function is as follows. Molecular chaperone; binds unfolded polypeptides in vitro, and has a weak ATPase activity. This Thermococcus sp. (strain KS-8) protein is Thermosome subunit alpha (thsA).